A 306-amino-acid chain; its full sequence is Ribonuclease Z (306 aa).

7 residues coordinate Zn(2+): His-63, His-65, Asp-67, His-68, His-140, Asp-211, and His-269. The active-site Proton acceptor is the Asp-67.

It belongs to the RNase Z family. In terms of assembly, homodimer. It depends on Zn(2+) as a cofactor.

It carries out the reaction Endonucleolytic cleavage of RNA, removing extra 3' nucleotides from tRNA precursor, generating 3' termini of tRNAs. A 3'-hydroxy group is left at the tRNA terminus and a 5'-phosphoryl group is left at the trailer molecule.. In terms of biological role, zinc phosphodiesterase, which displays some tRNA 3'-processing endonuclease activity. Probably involved in tRNA maturation, by removing a 3'-trailer from precursor tRNA. The sequence is that of Ribonuclease Z from Listeria monocytogenes serovar 1/2a (strain ATCC BAA-679 / EGD-e).